Here is a 606-residue protein sequence, read N- to C-terminus: Sodium-independent sulfate anion transporter (606 aa).

At Met1–Asp51 the chain is on the extracellular side. The chain crosses the membrane as a helical span at residues Phe52–Val72. Residue Ala73 is a topological domain, cytoplasmic. Residues Gly74–Leu94 form a helical membrane-spanning segment. At Gly95–Val100 the chain is on the extracellular side. Residues Thr101–Phe117 form a helical membrane-spanning segment. Over His118 to Glu119 the chain is Cytoplasmic. The helical transmembrane segment at Pro120–Leu140 threads the bilayer. Residues Arg141–Asp147 are Extracellular-facing. A helical transmembrane segment spans residues Phe148–Gly168. The Cytoplasmic portion of the chain corresponds to Gln169–Thr197. The chain crosses the membrane as a helical span at residues Arg198–Met218. Topologically, residues Arg219–Leu250 are extracellular. Residues Val251–Ile271 form a helical membrane-spanning segment. The Cytoplasmic segment spans residues Leu272–Gly307. The helical transmembrane segment at Ala308–Phe328 threads the bilayer. Residues Ala329 to Glu341 lie on the Extracellular side of the membrane. A helical transmembrane segment spans residues Leu342–Gly362. Residues Ser363–Gly374 are Cytoplasmic-facing. A helical membrane pass occupies residues Val375 to Leu395. The Extracellular portion of the chain corresponds to Thr396–Leu398. Residues Phe399–Phe419 form a helical membrane-spanning segment. Over Asp420–Thr441 the chain is Cytoplasmic. Residues Phe442 to Leu462 form a helical membrane-spanning segment. At Met463 to Ala606 the chain is on the extracellular side. An STAS domain is found at Arg470–Pro584.

It belongs to the SLC26A/SulP transporter (TC 2.A.53) family. Detected in all tissues tested with highest expression observed in brain, kidney, HEVEC and placenta and lowest in pancreas, skeletal muscle, liver, lung and heart.

It is found in the cell membrane. The protein localises to the lysosome membrane. It localises to the apical cell membrane. The protein resides in the basolateral cell membrane. The catalysed reaction is hydrogencarbonate(in) + chloride(out) = hydrogencarbonate(out) + chloride(in). It carries out the reaction sulfate(in) + H(+)(in) = sulfate(out) + H(+)(out). The enzyme catalyses oxalate(in) + chloride(out) = oxalate(out) + chloride(in). Sodium-independent anion exchanger mediating bicarbonate, chloride, sulfate and oxalate transport. Exhibits sodium-independent sulfate anion transporter activity that may cooperate with SLC26A2 to mediate DIDS-sensitive sulfate uptake into high endothelial venules endothelial cells (HEVEC). In the kidney, mediates chloride-bicarbonate exchange, facilitating V-ATPase-mediated acid secretion. May function as a chloride channel, playing an important role in moderating chloride homeostasis and neuronal activity in the cerebellum. This Homo sapiens (Human) protein is Sodium-independent sulfate anion transporter.